We begin with the raw amino-acid sequence, 497 residues long: Probable cytosol aminopeptidase (497 aa).

Residues Lys267 and Asp272 each coordinate Mn(2+). Lys279 is a catalytic residue. Residues Asp290, Asp349, and Glu351 each coordinate Mn(2+). The active site involves Arg353.

It belongs to the peptidase M17 family. The cofactor is Mn(2+).

The protein resides in the cytoplasm. The catalysed reaction is Release of an N-terminal amino acid, Xaa-|-Yaa-, in which Xaa is preferably Leu, but may be other amino acids including Pro although not Arg or Lys, and Yaa may be Pro. Amino acid amides and methyl esters are also readily hydrolyzed, but rates on arylamides are exceedingly low.. It catalyses the reaction Release of an N-terminal amino acid, preferentially leucine, but not glutamic or aspartic acids.. Its function is as follows. Presumably involved in the processing and regular turnover of intracellular proteins. Catalyzes the removal of unsubstituted N-terminal amino acids from various peptides. This is Probable cytosol aminopeptidase from Nitrosomonas eutropha (strain DSM 101675 / C91 / Nm57).